A 1188-amino-acid chain; its full sequence is Phospholipid-transporting ATPase IB (1188 aa).

Residues 1–94 are Cytoplasmic-facing; that stretch reads MLNGAGLDKA…PRFLYEQIRR (94 aa). T45 is modified (phosphothreonine). A helical transmembrane segment spans residues 95 to 115; the sequence is AANAFFLFIALLQQIPDVSPT. Over 116-119 the chain is Extracellular; that stretch reads GRYT. Residues 120–140 traverse the membrane as a helical segment; the sequence is TLVPLIIILTIAGIKEIVEDF. At 141-316 the chain is on the cytoplasmic side; it reads KRHKADNAVN…SNVEKVTNVQ (176 aa). Residues 317-337 form a helical membrane-spanning segment; the sequence is ILVLFGILLVMALVSSAGALY. The Extracellular portion of the chain corresponds to 338 to 364; that stretch reads WNRSHGEKNWYIKKMDTTSDNFGYNLL. A helical membrane pass occupies residues 365–385; sequence TFIILYNNLIPISLLVTLEVV. Topologically, residues 386–887 are cytoplasmic; that stretch reads KYTQALFINW…CILYCFYKNV (502 aa). Catalysis depends on D428, which acts as the 4-aspartylphosphate intermediate. 12 residues coordinate ATP: D428, K429, T430, E528, F569, K592, R625, T705, G706, D707, R795, and K801. Position 428 (D428) interacts with Mg(2+). T430 contacts Mg(2+). Residue D821 coordinates Mg(2+). ATP-binding residues include N824 and D825. A Mg(2+)-binding site is contributed by D825. Residues 888–908 traverse the membrane as a helical segment; it reads VLYIIELWFAFVNGFSGQILF. The Extracellular portion of the chain corresponds to 909–910; the sequence is ER. A helical membrane pass occupies residues 911 to 931; sequence WCIGLYNVIFTALPPFTLGIF. Over 932–959 the chain is Cytoplasmic; sequence ERSCTQESMLRFPQLYKITQNGEGFNTK. The chain crosses the membrane as a helical span at residues 960–980; it reads VFWGHCINALVHSLILFWFPM. Residues 981-997 lie on the Extracellular side of the membrane; the sequence is KALEHDTVLTSGHATDY. Residues 998 to 1018 form a helical membrane-spanning segment; that stretch reads LFVGNIVYTYVVVTVCLKAGL. Over 1019–1028 the chain is Cytoplasmic; sequence ETTAWTKFSH. A helical membrane pass occupies residues 1029 to 1049; that stretch reads LAVWGSMLTWLVFFGIYSTIW. The Extracellular segment spans residues 1050 to 1063; that stretch reads PTIPIAPDMRGQAT. The helical transmembrane segment at 1064-1084 threads the bilayer; the sequence is MVLSSAHFWLGLFLVPTACLI. At 1085-1188 the chain is on the cytoplasmic side; that stretch reads EDVAWRAAKH…DTTKKKSRKK (104 aa). Residues 1162–1188 are disordered; sequence SQEEHGAVSQEEVIRAYDTTKKKSRKK. The span at 1163 to 1182 shows a compositional bias: basic and acidic residues; that stretch reads QEEHGAVSQEEVIRAYDTTK.

The protein belongs to the cation transport ATPase (P-type) (TC 3.A.3) family. Type IV subfamily. Component of a P4-ATPase flippase complex which consists of a catalytic alpha subunit and an accessory beta subunit. Interacts with TMEM30A to form a flippase complex. Requires Mg(2+) as cofactor. As to expression, strongly expressed in the brain, cerebellum, retina and testis.

The protein localises to the membrane. It is found in the golgi apparatus membrane. It localises to the endosome membrane. Its subcellular location is the cell membrane. The protein resides in the photoreceptor outer segment membrane. The protein localises to the photoreceptor inner segment membrane. The catalysed reaction is ATP + H2O + phospholipidSide 1 = ADP + phosphate + phospholipidSide 2.. It catalyses the reaction a 1,2-diacyl-sn-glycero-3-phospho-L-serine(out) + ATP + H2O = a 1,2-diacyl-sn-glycero-3-phospho-L-serine(in) + ADP + phosphate + H(+). The enzyme catalyses a 1,2-diacyl-sn-glycero-3-phosphoethanolamine(in) + ATP + H2O = a 1,2-diacyl-sn-glycero-3-phosphoethanolamine(out) + ADP + phosphate + H(+). Catalytic component of a P4-ATPase flippase complex which catalyzes the hydrolysis of ATP coupled to the transport of aminophospholipids from the outer to the inner leaflet of various membranes and ensures the maintenance of asymmetric distribution of phospholipids. Able to translocate phosphatidylserine, but not phosphatidylcholine. Phospholipid translocation also seems to be implicated in vesicle formation and in uptake of lipid signaling molecules. Reconstituted to liposomes, the ATP8A2:TMEM30A flippase complex predominantly transports phosphatidylserine (PS) and to a lesser extent phosphatidylethanolamine (PE). Phospholipid translocation is not associated with a countertransport of an inorganic ion or other charged substrate from the cytoplasmic side toward the exoplasm in connection with the phosphorylation from ATP. ATP8A2:TMEM30A may be involved in regulation of neurite outgrowth. Proposed to function in the generation and maintenance of phospholipid asymmetry in photoreceptor disk membranes and neuronal axon membranes. May be involved in vesicle trafficking in neuronal cells. Required for normal visual and auditory function; involved in photoreceptor and inner ear spiral ganglion cell survival. This chain is Phospholipid-transporting ATPase IB, found in Homo sapiens (Human).